The chain runs to 576 residues: Arginine--tRNA ligase (576 aa).

The 'HIGH' region signature appears at 122–132 (PNVAKEMHVGH).

This sequence belongs to the class-I aminoacyl-tRNA synthetase family. Monomer.

It localises to the cytoplasm. It catalyses the reaction tRNA(Arg) + L-arginine + ATP = L-arginyl-tRNA(Arg) + AMP + diphosphate. The protein is Arginine--tRNA ligase of Pectobacterium atrosepticum (strain SCRI 1043 / ATCC BAA-672) (Erwinia carotovora subsp. atroseptica).